Here is a 219-residue protein sequence, read N- to C-terminus: tRNA (guanine-N(7)-)-methyltransferase (219 aa).

Positions 43, 68, 101, and 124 each coordinate S-adenosyl-L-methionine. Substrate is bound by residues lysine 128 and aspartate 160.

The protein belongs to the class I-like SAM-binding methyltransferase superfamily. TrmB family.

The catalysed reaction is guanosine(46) in tRNA + S-adenosyl-L-methionine = N(7)-methylguanosine(46) in tRNA + S-adenosyl-L-homocysteine. Its pathway is tRNA modification; N(7)-methylguanine-tRNA biosynthesis. Catalyzes the formation of N(7)-methylguanine at position 46 (m7G46) in tRNA. The polypeptide is tRNA (guanine-N(7)-)-methyltransferase (Clostridium beijerinckii (strain ATCC 51743 / NCIMB 8052) (Clostridium acetobutylicum)).